The chain runs to 585 residues: MSVISTLRDRATTTPSDEAFVFMDYDTKTGDQIDRMTWSQLYSRVTAVSAYLISYGRHADRRRTAAISAPQGLDYVAGFLGALCAGWTPVPLPEPLGSLRDKRTGLAVLDCAADVVLTTSQAETRVRATIATHGASVTTPVIALDTLDEPSGDNCDLDSQLSDWSSYLQYTSGSTANPRGVVLSMRNVTENVDQIIRNYFRHEGGAPRLPSSVVSWLPLYHDMGLMVGLFIPLFVGCPVILTSPEAFIRKPARWMQLLAKHQAPFSAAPNFAFDLAVAKTSEEDMAGLDLGHVNTIINGAEQVQPNTITKFLRRFRPYNLMPAAVKPSYGMAEAVVYLATTKAGSPPTSTEFDADSLARGHAELSTFETERATRLIRYHSDDKEPLLRIVDPDSNIELGPGRIGEIWIHGKNVSTGYHNADDALNRDKFQASIREASAGTPRSPWLRTGDLGFIVGDEFYIVGRMKDLIIQDGVNHYPDDIETTVKEFTGGRVAAFSVSDDGVEHLVIAAEVRTEHGPDKVTIMDFSTIKRLVVSALSKLHGLHVTDFLLVPPGALPKTTSGKISRAACAKQYGANKLQRVATFP.

The protein belongs to the ATP-dependent AMP-binding enzyme family.

Its pathway is lipid metabolism; fatty acid biosynthesis. In terms of biological role, catalyzes the activation of long-chain fatty acids as acyl-adenylates (acyl-AMP), which are then transferred to a multifunctional polyketide synthase (PKS) for further chain extension. This Mycobacterium tuberculosis (strain CDC 1551 / Oshkosh) protein is Probable long-chain-fatty-acid--AMP ligase FadD30 (fadD30).